The primary structure comprises 627 residues: CTP synthase (627 aa).

In terms of domain architecture, Glutamine amidotransferase type-1 spans 300 to 554; it reads CIAVVGKYTK…LASVDRLNQY (255 aa). Active-site for GATase activity residues include C399, H526, and E528. S567, S570, S571, and S588 each carry phosphoserine. T595 carries the phosphothreonine modification. Residues 599–613 show a composition bias toward polar residues; it reads GISKSCNGSISTSDS. The segment at 599-627 is disordered; sequence GISKSCNGSISTSDSEGACGGVDPTNGHK.

The protein belongs to the CTP synthase family. As to expression, in ovary, expressed in oocytes, follicle cells and nurse cells. Also expressed in larval and adult testis (at protein level). In larvae, expressed in lymph gland, salivary gland, regions of the midgut, testis, optical lobe and trachea. Isoform 1 is expressed in adult testis, ovary, accessory gland and head. Isoform 2 is weakly expressed in ovary.

The protein resides in the cytoplasm. The catalysed reaction is UTP + L-glutamine + ATP + H2O = CTP + L-glutamate + ADP + phosphate + 2 H(+). It participates in pyrimidine metabolism; CTP biosynthesis via de novo pathway; CTP from UDP: step 2/2. Its function is as follows. Catalyzes the ATP-dependent amination of UTP to CTP with either L-glutamine or ammonia as the source of nitrogen. Constitutes the rate-limiting enzyme in the synthesis of cytosine nucleotides. Required for assembly of cytoophidium in female germline cells. In nurse cells, CTPsyn filament assembly in the cytoophidium is regulated by Ack kinase which may thereby contribute to the control of CTP production at specific stages of oogenesis and development of the nurse cell membrane. The sequence is that of CTP synthase from Drosophila melanogaster (Fruit fly).